We begin with the raw amino-acid sequence, 342 residues long: UDP-N-acetylglucosamine--N-acetylmuramyl-(pentapeptide) pyrophosphoryl-undecaprenol N-acetylglucosamine transferase (342 aa).

Residues 10 to 12, N124, S177, and Q275 contribute to the UDP-N-acetyl-alpha-D-glucosamine site; that span reads TGG.

It belongs to the glycosyltransferase 28 family. MurG subfamily.

It is found in the cell inner membrane. It catalyses the reaction di-trans,octa-cis-undecaprenyl diphospho-N-acetyl-alpha-D-muramoyl-L-alanyl-D-glutamyl-meso-2,6-diaminopimeloyl-D-alanyl-D-alanine + UDP-N-acetyl-alpha-D-glucosamine = di-trans,octa-cis-undecaprenyl diphospho-[N-acetyl-alpha-D-glucosaminyl-(1-&gt;4)]-N-acetyl-alpha-D-muramoyl-L-alanyl-D-glutamyl-meso-2,6-diaminopimeloyl-D-alanyl-D-alanine + UDP + H(+). Its pathway is cell wall biogenesis; peptidoglycan biosynthesis. Its function is as follows. Cell wall formation. Catalyzes the transfer of a GlcNAc subunit on undecaprenyl-pyrophosphoryl-MurNAc-pentapeptide (lipid intermediate I) to form undecaprenyl-pyrophosphoryl-MurNAc-(pentapeptide)GlcNAc (lipid intermediate II). The chain is UDP-N-acetylglucosamine--N-acetylmuramyl-(pentapeptide) pyrophosphoryl-undecaprenol N-acetylglucosamine transferase from Campylobacter jejuni subsp. jejuni serotype O:2 (strain ATCC 700819 / NCTC 11168).